The chain runs to 831 residues: Translation initiation factor IF-2 (831 aa).

Residues 329-499 form the tr-type G domain; that stretch reads TRAPVVTVMG…LLIAEMQDLK (171 aa). The interval 338–345 is G1; the sequence is GHVDHGKT. 338–345 serves as a coordination point for GTP; it reads GHVDHGKT. The G2 stretch occupies residues 363-367; that stretch reads GITQH. The segment at 385-388 is G3; it reads DTPG. GTP is bound by residues 385 to 389 and 439 to 442; these read DTPGH and NKID. The interval 439–442 is G4; sequence NKID. The segment at 475 to 477 is G5; sequence SAL.

Belongs to the TRAFAC class translation factor GTPase superfamily. Classic translation factor GTPase family. IF-2 subfamily.

It is found in the cytoplasm. One of the essential components for the initiation of protein synthesis. Protects formylmethionyl-tRNA from spontaneous hydrolysis and promotes its binding to the 30S ribosomal subunits. Also involved in the hydrolysis of GTP during the formation of the 70S ribosomal complex. In Rickettsia massiliae (strain Mtu5), this protein is Translation initiation factor IF-2.